The following is a 630-amino-acid chain: 1-deoxy-D-xylulose-5-phosphate synthase (630 aa).

Residues H72 and G113 to S115 contribute to the thiamine diphosphate site. Residue D144 coordinates Mg(2+). Residues G145–A146, N173, Y284, and E367 each bind thiamine diphosphate. N173 lines the Mg(2+) pocket.

The protein belongs to the transketolase family. DXPS subfamily. Homodimer. Mg(2+) is required as a cofactor. Thiamine diphosphate serves as cofactor.

It carries out the reaction D-glyceraldehyde 3-phosphate + pyruvate + H(+) = 1-deoxy-D-xylulose 5-phosphate + CO2. It functions in the pathway metabolic intermediate biosynthesis; 1-deoxy-D-xylulose 5-phosphate biosynthesis; 1-deoxy-D-xylulose 5-phosphate from D-glyceraldehyde 3-phosphate and pyruvate: step 1/1. Catalyzes the acyloin condensation reaction between C atoms 2 and 3 of pyruvate and glyceraldehyde 3-phosphate to yield 1-deoxy-D-xylulose-5-phosphate (DXP). This Geobacillus sp. (strain WCH70) protein is 1-deoxy-D-xylulose-5-phosphate synthase.